The following is a 578-amino-acid chain: A-type ATP synthase subunit A (578 aa).

An ATP-binding site is contributed by 228-235 (GPFGSGKT).

This sequence belongs to the ATPase alpha/beta chains family. Has multiple subunits with at least A(3), B(3), C, D, E, F, H, I and proteolipid K(x).

Its subcellular location is the cell membrane. It catalyses the reaction ATP + H2O + 4 H(+)(in) = ADP + phosphate + 5 H(+)(out). Component of the A-type ATP synthase that produces ATP from ADP in the presence of a proton gradient across the membrane. The A chain is the catalytic subunit. The sequence is that of A-type ATP synthase subunit A from Methanococcoides burtonii (strain DSM 6242 / NBRC 107633 / OCM 468 / ACE-M).